The chain runs to 215 residues: Pyrrolidone-carboxylate peptidase (215 aa).

Active-site residues include Glu80, Cys143, and His167.

This sequence belongs to the peptidase C15 family. Homotetramer.

It is found in the cytoplasm. The catalysed reaction is Release of an N-terminal pyroglutamyl group from a polypeptide, the second amino acid generally not being Pro.. Its function is as follows. Removes 5-oxoproline from various penultimate amino acid residues except L-proline. The sequence is that of Pyrrolidone-carboxylate peptidase from Bacillus cereus (strain ATCC 14579 / DSM 31 / CCUG 7414 / JCM 2152 / NBRC 15305 / NCIMB 9373 / NCTC 2599 / NRRL B-3711).